A 335-amino-acid polypeptide reads, in one-letter code: UPF0324 membrane protein LMOf2365_2179 (335 aa).

The next 8 membrane-spanning stretches (helical) occupy residues 10-28 (TFWY…SYFL), 33-55 (FLMI…ALFP), 91-113 (AGWR…VYFL), 123-142 (LAIL…VVAI), 155-177 (VAAT…IYPI), 251-270 (VPWF…FGII), 277-299 (FLVI…NVHL), and 309-331 (PFAA…VLLF).

It belongs to the UPF0324 family.

The protein resides in the cell membrane. This Listeria monocytogenes serotype 4b (strain F2365) protein is UPF0324 membrane protein LMOf2365_2179.